Reading from the N-terminus, the 219-residue chain is uncharacterized protein (219 aa).

Basic residues predominate over residues proline 139 to serine 154. The segment at proline 139–threonine 160 is disordered. In terms of domain architecture, LysM spans lysine 159 to isoleucine 217.

This is an uncharacterized protein from Bacillus subtilis (strain 168).